The chain runs to 219 residues: 3,4-dihydroxy-2-butanone 4-phosphate synthase (219 aa).

D-ribulose 5-phosphate is bound by residues Arg-28–Glu-29, Asp-33, Arg-140–Thr-144, and Glu-164. A Mg(2+)-binding site is contributed by Glu-29. Position 143 (His-143) interacts with Mg(2+).

It belongs to the DHBP synthase family. As to quaternary structure, homodimer. Mg(2+) is required as a cofactor. Mn(2+) serves as cofactor.

It catalyses the reaction D-ribulose 5-phosphate = (2S)-2-hydroxy-3-oxobutyl phosphate + formate + H(+). The protein operates within cofactor biosynthesis; riboflavin biosynthesis; 2-hydroxy-3-oxobutyl phosphate from D-ribulose 5-phosphate: step 1/1. Its function is as follows. Catalyzes the conversion of D-ribulose 5-phosphate to formate and 3,4-dihydroxy-2-butanone 4-phosphate. This chain is 3,4-dihydroxy-2-butanone 4-phosphate synthase, found in Methanocorpusculum labreanum (strain ATCC 43576 / DSM 4855 / Z).